A 288-amino-acid polypeptide reads, in one-letter code: Energy-coupling factor transporter ATP-binding protein EcfA3 (288 aa).

Residues 3–245 (INFRNVSFSY…ESYLRKEKLR (243 aa)) enclose the ABC transporter domain. 40 to 47 (GHTGSGKS) provides a ligand contact to ATP.

This sequence belongs to the ABC transporter superfamily. Energy-coupling factor EcfA family. As to quaternary structure, forms a stable energy-coupling factor (ECF) transporter complex composed of 2 membrane-embedded substrate-binding proteins (S component), 2 ATP-binding proteins (A component) and 2 transmembrane proteins (T component).

It localises to the cell membrane. Its function is as follows. ATP-binding (A) component of a common energy-coupling factor (ECF) ABC-transporter complex. Unlike classic ABC transporters this ECF transporter provides the energy necessary to transport a number of different substrates. The polypeptide is Energy-coupling factor transporter ATP-binding protein EcfA3 (Oenococcus oeni (strain ATCC BAA-331 / PSU-1)).